A 243-amino-acid polypeptide reads, in one-letter code: Ubiquinone/menaquinone biosynthesis C-methyltransferase UbiE (243 aa).

S-adenosyl-L-methionine contacts are provided by residues threonine 69, aspartate 90, and 116–117; that span reads DA.

This sequence belongs to the class I-like SAM-binding methyltransferase superfamily. MenG/UbiE family.

It carries out the reaction a 2-demethylmenaquinol + S-adenosyl-L-methionine = a menaquinol + S-adenosyl-L-homocysteine + H(+). It catalyses the reaction a 2-methoxy-6-(all-trans-polyprenyl)benzene-1,4-diol + S-adenosyl-L-methionine = a 5-methoxy-2-methyl-3-(all-trans-polyprenyl)benzene-1,4-diol + S-adenosyl-L-homocysteine + H(+). Its pathway is quinol/quinone metabolism; menaquinone biosynthesis; menaquinol from 1,4-dihydroxy-2-naphthoate: step 2/2. It participates in cofactor biosynthesis; ubiquinone biosynthesis. In terms of biological role, methyltransferase required for the conversion of demethylmenaquinol (DMKH2) to menaquinol (MKH2) and the conversion of 2-polyprenyl-6-methoxy-1,4-benzoquinol (DDMQH2) to 2-polyprenyl-3-methyl-6-methoxy-1,4-benzoquinol (DMQH2). The polypeptide is Ubiquinone/menaquinone biosynthesis C-methyltransferase UbiE (Burkholderia cenocepacia (strain HI2424)).